A 612-amino-acid chain; its full sequence is MTDKEKRLERQSRIRNFSIIAHIDHGKSTLADRILEKTSAITQREMKEQLLDSMDLERERGITIKLNSVQLKYKAKDGEEYIFHLIDTPGHVDFTYEVSRSLAACEGAILVVDAAQGIEAQTLANVYLALDNDLEILPVINKIDLPSAEPERVRQEVEDVIGLDASEAVLASAKAGIGIEEILEQIVEKVPAPTGDPEAPLKALIFDSLYDAYRGVVAYIRVVEGTVKPGQKIKMMATGKEFEVTEVGVFTPKATPTNELTVGDVGFLTASIKNVGDTRVGDTITSAANPAEEALPGYRKLNPMVYCGLYPIDTAKYNDLREALEKLELNDSSLQYEAETSQALGFGFRCGFLGMLHMEIIQERIEREFNIDLITTAPSVIYDVYMTDGEKVVVDNPSNMPDPQKIERVEEPYVKATMMVPNDYVGAVMELCQGKRGNFIDMQYLDANRVSIIYDMPLAEIVYEFFDQLKSSTKGYASFDYELIGYKPSKLVKMDIMLNGEKIDALSFIVHRDYAYERGKVIVEKLKELIPRQQFEVPVQAAIGQKIVARSTIKAMRKNVLAKCYGGDISRKRKLLEKQKEGKRRMKQVGSVEVPQEAFMAVLKMDDSPKKQ.

One can recognise a tr-type G domain in the interval 12–194 (SRIRNFSIIA…QIVEKVPAPT (183 aa)). GTP is bound by residues 24–29 (DHGKST) and 141–144 (NKID).

The protein belongs to the TRAFAC class translation factor GTPase superfamily. Classic translation factor GTPase family. LepA subfamily.

It is found in the cell membrane. It carries out the reaction GTP + H2O = GDP + phosphate + H(+). Required for accurate and efficient protein synthesis under certain stress conditions. May act as a fidelity factor of the translation reaction, by catalyzing a one-codon backward translocation of tRNAs on improperly translocated ribosomes. Back-translocation proceeds from a post-translocation (POST) complex to a pre-translocation (PRE) complex, thus giving elongation factor G a second chance to translocate the tRNAs correctly. Binds to ribosomes in a GTP-dependent manner. The protein is Elongation factor 4 of Bacillus subtilis (strain 168).